The following is a 425-amino-acid chain: UDP-N-acetylglucosamine 1-carboxyvinyltransferase (425 aa).

Residue lysine 22–asparagine 23 coordinates phosphoenolpyruvate. A UDP-N-acetyl-alpha-D-glucosamine-binding site is contributed by arginine 98. Cysteine 122 acts as the Proton donor in catalysis. A 2-(S-cysteinyl)pyruvic acid O-phosphothioketal modification is found at cysteine 122. UDP-N-acetyl-alpha-D-glucosamine contacts are provided by residues arginine 127–glutamine 131, aspartate 313, and isoleucine 335.

This sequence belongs to the EPSP synthase family. MurA subfamily.

Its subcellular location is the cytoplasm. It carries out the reaction phosphoenolpyruvate + UDP-N-acetyl-alpha-D-glucosamine = UDP-N-acetyl-3-O-(1-carboxyvinyl)-alpha-D-glucosamine + phosphate. It functions in the pathway cell wall biogenesis; peptidoglycan biosynthesis. Functionally, cell wall formation. Adds enolpyruvyl to UDP-N-acetylglucosamine. The protein is UDP-N-acetylglucosamine 1-carboxyvinyltransferase of Xylella fastidiosa (strain 9a5c).